The chain runs to 199 residues: Recombination protein RecR (199 aa).

The C4-type zinc finger occupies 58-73 (CRICYNITDTEVCNIC). Residues 81–176 (SLICVVSHPM…KVTRIAHGVP (96 aa)) form the Toprim domain.

The protein belongs to the RecR family.

Its function is as follows. May play a role in DNA repair. It seems to be involved in an RecBC-independent recombinational process of DNA repair. It may act with RecF and RecO. The protein is Recombination protein RecR of Thermoanaerobacter sp. (strain X514).